The primary structure comprises 445 residues: Tol-Pal system protein TolB (445 aa).

The N-terminal stretch at 1–26 (MLNRRNFIRTTSALAASTALPGYAFG) is a signal peptide.

It belongs to the TolB family. In terms of assembly, the Tol-Pal system is composed of five core proteins: the inner membrane proteins TolA, TolQ and TolR, the periplasmic protein TolB and the outer membrane protein Pal. They form a network linking the inner and outer membranes and the peptidoglycan layer.

The protein resides in the periplasm. Functionally, part of the Tol-Pal system, which plays a role in outer membrane invagination during cell division and is important for maintaining outer membrane integrity. This is Tol-Pal system protein TolB from Jannaschia sp. (strain CCS1).